Here is a 104-residue protein sequence, read N- to C-terminus: Transcription factor S (104 aa).

8 residues coordinate Zn(2+): C4, C7, C20, C22, C65, C68, C93, and C96. A C4-type zinc finger spans residues C4–C22. Residues T61–R101 form a TFIIS-type zinc finger.

Belongs to the archaeal RpoM/eukaryotic RPA12/RPB9/RPC11 RNA polymerase family.

Its function is as follows. Induces RNA cleavage activity in the RNA polymerase. In its presence, the cleavage activity of the RNA polymerase truncates the RNA back to position +15 in a stepwise manner by releasing mainly dinucleotides from the 3'-end of the nascent RNA. The truncated RNAs are able to continue elongation. Involved in transcriptional proofreading and fidelity. Misincorporation of nucleotides during elongation of transcription leads to arrested elongation complexes which are rescued by TFS-promoted removal of a dinucleotide from the 3'-end. TFS is able to induce a cleavage resynthesis cycle in stalled elongation complexes (resulting from the next missing nucleotide or a reduced incorporation rate of a wrong nucleotide) preventing misincorporation and enabling proofreading in a post-incorporation manner. Pausing of elongation complexes is the main determinant of TFS-induced RNA cleavage. The chain is Transcription factor S from Methanothermobacter thermautotrophicus (strain ATCC 29096 / DSM 1053 / JCM 10044 / NBRC 100330 / Delta H) (Methanobacterium thermoautotrophicum).